Reading from the N-terminus, the 99-residue chain is EPIDERMAL PATTERNING FACTOR-like protein 8 (99 aa).

The signal sequence occupies residues 1–35 (MDSSRKYKRCGFGAALFVANIFFSLLSLHCISGAH). 3 disulfide bridges follow: cysteine 53-cysteine 90, cysteine 57-cysteine 63, and cysteine 60-cysteine 92.

This sequence belongs to the plant cysteine rich small secretory peptide family. Epidermal patterning factor subfamily.

The protein resides in the secreted. In terms of biological role, controls stomatal patterning. The polypeptide is EPIDERMAL PATTERNING FACTOR-like protein 8 (Arabidopsis thaliana (Mouse-ear cress)).